The following is a 953-amino-acid chain: MTPIAITPVAPVDIIYDLKHTERATESSPVTLLDVFSRAVSQYPDHELSFITSSAHDSTVHTKTFAEFNQHVHALAQAMRAWGKPTGSVIVVYLTEHEDNMAAVWASLLAGYVPCLQPALSAQQAHKEGHVGHIKNLFSSATWLTNESGAEQVQSISGLDIHLLSELKASAEAGVDFQAHQPNPDDEAILFLTSGSTGFSKAVVHTHRTILAACHAKGESYGLTSESKIMNWVGFDHVAGSLEMHIAPLLYGASQLHVHASAILSDPLRFLHLIEEKSIQLAFAPNFLLAKLTRDLEKRSDLFGKFDLSSIKRINSGGEAVVSSTAQAFARTLQNLAKDGDASFVISAGFGMTETCAGCIYDPINVLETPPSYEFLELGTPVAGCEMRIVNPEDGVTPRPDGESGELQVRGPMVFVRYYNNPEATSSSFVEGGWYRTGDVGIVEQGKMRLSGRIKDTVIVHGVSYGIPELETYLQTVEGVTHSFLAAAPYRAPGQETEGFVVFYSPTFDLDSEDAPAKLFATHRALRDVSVKLITLPPQQIIPIPINQMEKTTLGKLSRARLVNLLKQGELAKHIDRAEELVSIARGASFVAPSTETEKTLAGIYAGIFNLSVSDMSASENFFELGGTSIDVIRLKREGESAFDLPEIPTIQILKHPVISSLAKYVDSLISKDASQEEYDPIVPLQLTGNKTPIFMVHPGVGEVLIFVNLAKYFQNERPFYALRARGFEPGHPFFTTMDEMVSCYAAAVKRTQPHGPYAIAGYSYGGVVAFEVAKRLEAMGDEVKFTGLINIPPNIADRMHEIDWTGGMLNLSYFLGLVSKQDANDLAPSMRPLTRKEQLEIVWKLSPPERLVELQLTPEKLDHWVDIAGSLIECGKTYEPGSSVSVLDVFYAIPLRGSKEDWLNKQLKPWAGYSRAEPSYTDVPGQHYTLMDFDHVPGFQKIFRSRLEARGL.

The interval 37 to 460 (SRAVSQYPDH…SGRIKDTVIV (424 aa)) is adenylation (A) domain. The 79-residue stretch at 592 to 670 (APSTETEKTL…SLAKYVDSLI (79 aa)) folds into the Carrier domain. The segment at 597–667 (TEKTLAGIYA…VISSLAKYVD (71 aa)) is thiolation and peptide carrier (T) domain. The residue at position 629 (Ser-629) is an O-(pantetheine 4'-phosphoryl)serine. The segment at 693 to 795 (PIFMVHPGVG…FTGLINIPPN (103 aa)) is thioesterase (TE) domain.

It belongs to the ATP-dependent AMP-binding enzyme family.

It functions in the pathway secondary metabolite biosynthesis. In terms of biological role, an L-tyrosine:2-oxoglutarate aminotransferase (probably invD) and atromentin synthetase invA5 catalyze consecutive steps to turn over L-tyrosine into atromentin, which represents the generic precursor molecule for the entire terphenylquinone and pulvinic acid family of pigments, which are widely distributed secondary metabolites in homobasidiomycetes. The first step catalyzed by the aminotransferase converts L-tyrosine in to 4-hydroxyphenylpyruvate (4-HPP). Adenylation of two 4-HPP monomers by the invA5 adenylation (A) domain, covalent tethering of the monomers as a thioester and oxoester onto the invA5 thiolation (T) and thioesterase (TE) domains, respectively, and symmetric C-C-bond formation between two monomers catalyzed by the invA5 TE domain leads to atromentin. In Paxillus involutus (Naked brimcap), this protein is Atromentin synthetase invA5 (invA5).